Here is a 189-residue protein sequence, read N- to C-terminus: UPF0316 protein Sca_1484 (189 aa).

Transmembrane regions (helical) follow at residues Pro8–Val28, Val40–Met60, and Phe66–Ile86.

The protein belongs to the UPF0316 family.

The protein resides in the cell membrane. The sequence is that of UPF0316 protein Sca_1484 from Staphylococcus carnosus (strain TM300).